The sequence spans 278 residues: NAD-dependent protein deacylase (278 aa).

The Deacetylase sirtuin-type domain maps to 22–270 (RSRIFHRDSA…PEYIREFLTT (249 aa)). Residue 46-65 (GAGISAESGIRTFRADDGLW) coordinates NAD(+). The substrate site is built by Y90 and R93. NAD(+) is bound at residue 127–130 (QNID). H145 serves as the catalytic Proton acceptor. Residues C153 and C172 each coordinate Zn(2+). NAD(+) contacts are provided by residues 212-214 (GTS), 238-240 (NLE), and A256.

The protein belongs to the sirtuin family. Class III subfamily. Requires Zn(2+) as cofactor.

Its subcellular location is the cytoplasm. It carries out the reaction N(6)-acetyl-L-lysyl-[protein] + NAD(+) + H2O = 2''-O-acetyl-ADP-D-ribose + nicotinamide + L-lysyl-[protein]. The catalysed reaction is N(6)-succinyl-L-lysyl-[protein] + NAD(+) + H2O = 2''-O-succinyl-ADP-D-ribose + nicotinamide + L-lysyl-[protein]. It catalyses the reaction N(6)-(2-hydroxyisobutanoyl)-L-lysyl-[protein] + NAD(+) + H2O = 2''-O-(2-hydroxyisobutanoyl)-ADP-D-ribose + nicotinamide + L-lysyl-[protein]. Functionally, NAD-dependent lysine deacetylase that specifically removes acetyl groups on target proteins. Also acts as a protein-lysine deacylase by mediating protein desuccinylation and de-2-hydroxyisobutyrylation. Modulates the activities of several proteins which are inactive in their acylated form. The polypeptide is NAD-dependent protein deacylase (Yersinia pestis).